The chain runs to 274 residues: Cytochrome b-c1 complex subunit Rieske, mitochondrial (274 aa).

At 79-103 (SHTDVRVPDFSEYRRLEVLDSTKSS) the chain is on the mitochondrial matrix side. A helical transmembrane segment spans residues 104-140 (RESSEARKGFSYLVTGVTTVGVAYAAKNVVTQFVSSM). Residues 141 to 274 (SASADVLALA…FTSDDMVIVG (134 aa)) lie on the Mitochondrial intermembrane side of the membrane. The 86-residue stretch at 187-272 (EAAVELSQLR…YEFTSDDMVI (86 aa)) folds into the Rieske domain. [2Fe-2S] cluster-binding residues include Cys217, His219, Cys236, His239, and Ser241. Cys222 and Cys238 are disulfide-bonded.

It belongs to the Rieske iron-sulfur protein family. In terms of assembly, component of the ubiquinol-cytochrome c oxidoreductase (cytochrome b-c1 complex, complex III, CIII), a multisubunit enzyme composed of 11 subunits. The complex is composed of 3 respiratory subunits cytochrome b, cytochrome c1 and Rieske protein UQCRFS1, 2 core protein subunits UQCRC1/QCR1 and UQCRC2/QCR2, and 6 low-molecular weight protein subunits UQCRH/QCR6, UQCRB/QCR7, UQCRQ/QCR8, UQCR10/QCR9, UQCR11/QCR10 and subunit 9, the cleavage product of Rieske protein UQCRFS1. The complex exists as an obligatory dimer and forms supercomplexes (SCs) in the inner mitochondrial membrane with NADH-ubiquinone oxidoreductase (complex I, CI) and cytochrome c oxidase (complex IV, CIV), resulting in different assemblies (supercomplex SCI(1)III(2)IV(1) and megacomplex MCI(2)III(2)IV(2)). Incorporation of the Rieske protein UQCRFS1 is the penultimate step in complex III assembly. Interacts with TTC19, which is involved in the clearance of UQCRFS1 fragments. As to quaternary structure, component of the ubiquinol-cytochrome c oxidoreductase (cytochrome b-c1 complex, complex III, CIII). Subunit 9 corresponds to the mitochondrial targeting sequence (MTS) of Rieske protein UQCRFS1. It is retained after processing and incorporated inside complex III, where it remains bound to the complex and localizes between the 2 core subunits UQCRC1/QCR1 and UQCRC2/QCR2. [2Fe-2S] cluster is required as a cofactor. In terms of processing, proteolytic processing is necessary for the correct insertion of UQCRFS1 in the complex III dimer. Several fragments are generated during UQCRFS1 insertion, most probably due to the endogenous matrix-processing peptidase (MPP) activity of the 2 core protein subunits UQCRC1/QCR1 and UQCRC2/QCR2, which are homologous to the 2 mitochondrial-processing peptidase (MPP) subunits beta-MPP and alpha-MPP respectively. The action of the protease is also necessary for the clearance of the UQCRFS1 fragments.

It is found in the mitochondrion inner membrane. The enzyme catalyses a quinol + 2 Fe(III)-[cytochrome c](out) = a quinone + 2 Fe(II)-[cytochrome c](out) + 2 H(+)(out). Its function is as follows. Component of the ubiquinol-cytochrome c oxidoreductase, a multisubunit transmembrane complex that is part of the mitochondrial electron transport chain which drives oxidative phosphorylation. The respiratory chain contains 3 multisubunit complexes succinate dehydrogenase (complex II, CII), ubiquinol-cytochrome c oxidoreductase (cytochrome b-c1 complex, complex III, CIII) and cytochrome c oxidase (complex IV, CIV), that cooperate to transfer electrons derived from NADH and succinate to molecular oxygen, creating an electrochemical gradient over the inner membrane that drives transmembrane transport and the ATP synthase. The cytochrome b-c1 complex catalyzes electron transfer from ubiquinol to cytochrome c, linking this redox reaction to translocation of protons across the mitochondrial inner membrane, with protons being carried across the membrane as hydrogens on the quinol. In the process called Q cycle, 2 protons are consumed from the matrix, 4 protons are released into the intermembrane space and 2 electrons are passed to cytochrome c. The Rieske protein is a catalytic core subunit containing a [2Fe-2S] iron-sulfur cluster. It cycles between 2 conformational states during catalysis to transfer electrons from the quinol bound in the Q(0) site in cytochrome b to cytochrome c1. Incorporation of UQCRFS1 is the penultimate step in complex III assembly. Functionally, component of the ubiquinol-cytochrome c oxidoreductase (cytochrome b-c1 complex, complex III, CIII). UQCRFS1 undergoes proteolytic processing once it is incorporated in the complex III dimer. One of the fragments, called subunit 9, corresponds to its mitochondrial targeting sequence (MTS). The proteolytic processing is necessary for the correct insertion of UQCRFS1 in the complex III dimer, but the persistence of UQCRFS1-derived fragments may prevent newly imported UQCRFS1 to be processed and assembled into complex III and is detrimental for the complex III structure and function. This Pongo pygmaeus (Bornean orangutan) protein is Cytochrome b-c1 complex subunit Rieske, mitochondrial (UQCRFS1).